We begin with the raw amino-acid sequence, 780 residues long: Exocyst complex component 3-like protein (780 aa).

The protein belongs to the SEC6 family.

The protein localises to the cytoplasmic vesicle. Its subcellular location is the secretory vesicle. Functionally, as part of the exocyst, may play a role in regulated exocytosis. This is Exocyst complex component 3-like protein (exoc3l1) from Danio rerio (Zebrafish).